The primary structure comprises 706 residues: ATP-dependent zinc metalloprotease FtsH (706 aa).

A compositionally biased stretch (polar residues) spans 1–17; it reads MAKNSLKPSNPYNSEPE. A disordered region spans residues 1–20; that stretch reads MAKNSLKPSNPYNSEPETPQ. Residues 1–24 are Cytoplasmic-facing; it reads MAKNSLKPSNPYNSEPETPQPRPK. The helical transmembrane segment at 25 to 45 threads the bilayer; that stretch reads LPMIYYVVVIALLIGLQLAFF. Topologically, residues 46–142 are periplasmic; that stretch reads WSGSSREIPY…RYEGSPGTTW (97 aa). The segment at 88–111 is disordered; that stretch reads GLPKQEEGNDTTRKLLPGAKTPEN. Residues 91–100 show a composition bias toward basic and acidic residues; sequence KQEEGNDTTR. The chain crosses the membrane as a helical span at residues 143–163; the sequence is ISELIQWVLPFALLFGLYFFI. The Cytoplasmic portion of the chain corresponds to 164-706; that stretch reads FRRMGAGGPG…LRQSRNVSDN (543 aa). Position 239-246 (239-246) interacts with ATP; sequence GPPGTGKT. His462 contacts Zn(2+). The active site involves Glu463. Zn(2+)-binding residues include His466 and Asp539. Residues 641-681 are disordered; sequence RPGGQEEDSGEVDCSKKSAENGMVAHEPETTADAESTEKVG.

This sequence in the central section; belongs to the AAA ATPase family. In the C-terminal section; belongs to the peptidase M41 family. Homohexamer. Zn(2+) serves as cofactor.

It is found in the cell inner membrane. Acts as a processive, ATP-dependent zinc metallopeptidase for both cytoplasmic and membrane proteins. Plays a role in the quality control of integral membrane proteins. The polypeptide is ATP-dependent zinc metalloprotease FtsH (Chlorobium luteolum (strain DSM 273 / BCRC 81028 / 2530) (Pelodictyon luteolum)).